A 1161-amino-acid polypeptide reads, in one-letter code: Voltage-gated inwardly rectifying potassium channel KCNH2 (1161 aa).

Over 1–405 (MPVRRGHVAP…RIHRWTILHY (405 aa)) the chain is Cytoplasmic. Residues 17 to 88 (TIIRKFEGQS…AAQIAQALLG (72 aa)) form the PAS domain. Positions 92–144 (RKVEIAFYRKDGSCFLCLVDVVPVKNEDGAVIMFILNFEVVMEKDMVGSPARD) constitute a PAC domain. The tract at residues 233 to 286 (ALVGSCSPPPPVSAPGPHPSLRAHSLNPDASGSSCSLARTRSRESCASVRRASS) is disordered. Residues serine 239 and serine 245 each carry the phosphoserine modification. Residues 239 to 250 (SPPPPVSAPGPH) show a composition bias toward pro residues. A compositionally biased stretch (polar residues) spans 260–271 (PDASGSSCSLAR). Serine 285, serine 286, serine 322, and serine 353 each carry phosphoserine. A helical transmembrane segment spans residues 406-426 (SPFKAVWDWLILLLVIYTAVF). At 427-452 (TPYSAAFLLKETEEGPPAPECGYACQ) the chain is on the extracellular side. The helical transmembrane segment at 453-473 (PLAVVDLIVDIMFIVDILINF) threads the bilayer. Topologically, residues 474–497 (RTTYVNANEEVVSHPGRIAVHYFK) are cytoplasmic. The chain crosses the membrane as a helical span at residues 498 to 518 (GWFLIDMVAAIPFDLLIFGSG). The Extracellular segment spans residues 519 to 522 (SEEL). The chain crosses the membrane as a helical; Voltage-sensor span at residues 523 to 543 (IGLLKTARLLRLVRVARKLDR). Topologically, residues 544 to 549 (YSEYGA) are cytoplasmic. A helical membrane pass occupies residues 550 to 570 (AVLLLLMCTFALIAHWLACIW). Residues 571-613 (YAIGNMEQPHMDSRIGWLHNLGDQMGKPYNSSGLGGPSIKDKY) are Extracellular-facing. Residue asparagine 600 is glycosylated (N-linked (GlcNAc...) asparagine). An intramembrane region (pore-forming) is located at residues 614–634 (VTGLYFTFSSLTSVGFGNVSP). The Selectivity filter signature appears at 626–631 (SVGFGN). Over 635-640 (NTNSEK) the chain is Extracellular. A helical membrane pass occupies residues 641 to 661 (IFSICVMLIGSLMYASIFGNV). Over 662–1161 (SAIIQRLYSG…LHRHGSDPGS (500 aa)) the chain is Cytoplasmic. The tract at residues 744–844 (PFRGATKDCL…IHRDDLLEVL (101 aa)) is cNMP-binding domain. The disordered stretch occupies residues 872–985 (GSPGSTEWEG…TEDCEKSSDT (114 aa)). A phosphoserine mark is found at serine 873 and serine 876. Residues 885–894 (RQRKRKLSFR) are compositionally biased toward basic residues. A compositionally biased stretch (low complexity) spans 930-941 (GESPSSGPSSPE). Pro residues predominate over residues 962–972 (SPRPPGEPPGG). Arginine 1016 is subject to Omega-N-methylarginine. A coiled-coil region spans residues 1037 to 1064 (RGDVESRLDALQRQLNRLETRLSADMAT). The interval 1121 to 1161 (ELPPGAPELPQEGPTRRLSLPGQLGALTSQPLHRHGSDPGS) is disordered. A Phosphoserine modification is found at serine 1139.

The protein belongs to the potassium channel family. H (Eag) (TC 1.A.1.20) subfamily. Kv11.1/KCNH2 sub-subfamily. The potassium channel is probably composed of a homo- or heterotetrameric complex of pore-forming alpha subunits that can associate with modulating beta subunits. Interacts with DNAJB12 and DNAJB14; chaperones DNAJB12 and DNAJB14 promote tetramerization. Heteromultimer with KCNH6/ERG2 and KCNH7/ERG3. Interacts with ALG10B. Forms a stable complex with KCNE1 or KCNE2, and that this heteromultimerization regulates Inward rectifier potassium channel activity. Interacts with CANX. The core-glycosylated, but not the fully glycosylated form interacts with RNF207. Interacts with NDFIP1 and NDFIP2; this interaction decreases the cell membrane expression by targeting KCNH2, through interaction with NEDD4L, for the degradation through the multivesicular bodies (MVBs)-lysosomal pathway. Post-translationally, phosphorylated on serine and threonine residues. Phosphorylation by PKA inhibits ion conduction. Detected in heart, both in atrium and in left ventricle.

It localises to the cell membrane. It carries out the reaction K(+)(in) = K(+)(out). In terms of biological role, pore-forming (alpha) subunit of voltage-gated inwardly rectifying potassium channel. Characterized by unusual gating kinetics by producing relatively small outward currents during membrane depolarization and large inward currents during subsequent repolarization which reflect a rapid inactivation during depolarization and quick recovery from inactivation but slow deactivation (closing) during repolarization. Channel properties are modulated by cAMP and subunit assembly. Forms a stable complex with KCNE1 or KCNE2, and that this heteromultimerization regulates inward rectifier potassium channel activity. The polypeptide is Voltage-gated inwardly rectifying potassium channel KCNH2 (Oryctolagus cuniculus (Rabbit)).